The primary structure comprises 406 residues: Bifunctional enzyme Fae/Hps (406 aa).

The segment at 1–164 (MSDIYEIGEA…AEKDRGTHPI (164 aa)) is formaldehyde-activating enzyme. The active-site Proton donor is His20. Substrate-binding residues include Asp22, Leu51, Lys69, Thr71, and Gln86. The tract at residues 165–406 (MGFKAMKLWN…RLALDEDEKI (242 aa)) is 3-hexulose-6-phosphate synthase.

The protein in the N-terminal section; belongs to the formaldehyde-activating enzyme family. This sequence in the C-terminal section; belongs to the HPS/KGPDC family. HPS subfamily.

It catalyses the reaction 5,6,7,8-tetrahydromethanopterin + formaldehyde = 5,10-methylenetetrahydromethanopterin + H2O. The enzyme catalyses D-ribulose 5-phosphate + formaldehyde = D-arabino-hex-3-ulose 6-phosphate. Its pathway is carbohydrate biosynthesis; D-ribose 5-phosphate biosynthesis. Its function is as follows. Catalyzes the condensation of formaldehyde with tetrahydromethanopterin (H(4)MPT) to 5,10-methylenetetrahydromethanopterin. In terms of biological role, catalyzes the reversible formation of ribulose-5-phosphate and formaldehyde from 3-hexulose-6-phosphate. In Methanosphaera stadtmanae (strain ATCC 43021 / DSM 3091 / JCM 11832 / MCB-3), this protein is Bifunctional enzyme Fae/Hps.